The primary structure comprises 429 residues: tRNA-2-methylthio-N(6)-dimethylallyladenosine synthase (429 aa).

The MTTase N-terminal domain occupies 2–115 (KLLYLQTLGC…ISEAVKTPKF (114 aa)). Residues Cys11, Cys46, Cys78, Cys147, Cys151, and Cys154 each contribute to the [4Fe-4S] cluster site. The Radical SAM core domain maps to 133–365 (RGSPYKAFVN…QSRHNEILDE (233 aa)). The region spanning 368–429 (KNQVGKIFDV…RMVLYGKITA (62 aa)) is the TRAM domain.

The protein belongs to the methylthiotransferase family. MiaB subfamily. As to quaternary structure, monomer. [4Fe-4S] cluster is required as a cofactor.

The protein localises to the cytoplasm. It catalyses the reaction N(6)-dimethylallyladenosine(37) in tRNA + (sulfur carrier)-SH + AH2 + 2 S-adenosyl-L-methionine = 2-methylsulfanyl-N(6)-dimethylallyladenosine(37) in tRNA + (sulfur carrier)-H + 5'-deoxyadenosine + L-methionine + A + S-adenosyl-L-homocysteine + 2 H(+). Catalyzes the methylthiolation of N6-(dimethylallyl)adenosine (i(6)A), leading to the formation of 2-methylthio-N6-(dimethylallyl)adenosine (ms(2)i(6)A) at position 37 in tRNAs that read codons beginning with uridine. This chain is tRNA-2-methylthio-N(6)-dimethylallyladenosine synthase, found in Campylobacter hominis (strain ATCC BAA-381 / DSM 21671 / CCUG 45161 / LMG 19568 / NCTC 13146 / CH001A).